We begin with the raw amino-acid sequence, 283 residues long: MPPAPAIVRTLPSLRRALERLRARRGTIALVPTMGALHEGHLALVRQAKRRASRVIVSIFVNPTQFAPHEDFGSYPRTWKADLAKLAEAKTDLIWRPDVSTMYPRDFATRISTEGPAIARLEDHFRPHFFGGVTTVVGKLFIQCRPDVALFGQKDYQQLKVVTRMVADLDLGVKIVGVPIVREPDGLAMSSRNVYLSNEQRARAPTLYRTLKDAAGRLRNGDHLEAVMADGARTIEDTGFSLDYFEARHAETLSPVGSLKDGPVRLLVAAKIGDTRLIDNLGV.

Residue 34–41 participates in ATP binding; sequence MGALHEGH. The active-site Proton donor is His41. Position 65 (Gln65) interacts with (R)-pantoate. Residue Gln65 participates in beta-alanine binding. 152 to 155 is an ATP binding site; the sequence is GQKD. Position 158 (Gln158) interacts with (R)-pantoate. ATP-binding positions include Val181 and 189-192; that span reads MSSR.

It belongs to the pantothenate synthetase family. In terms of assembly, homodimer.

Its subcellular location is the cytoplasm. The catalysed reaction is (R)-pantoate + beta-alanine + ATP = (R)-pantothenate + AMP + diphosphate + H(+). It participates in cofactor biosynthesis; (R)-pantothenate biosynthesis; (R)-pantothenate from (R)-pantoate and beta-alanine: step 1/1. Catalyzes the condensation of pantoate with beta-alanine in an ATP-dependent reaction via a pantoyl-adenylate intermediate. This Nitrobacter winogradskyi (strain ATCC 25391 / DSM 10237 / CIP 104748 / NCIMB 11846 / Nb-255) protein is Pantothenate synthetase.